The primary structure comprises 367 residues: 2-aminoethylphosphonate--pyruvate transaminase (367 aa).

Lysine 194 bears the N6-(pyridoxal phosphate)lysine mark.

Belongs to the class-V pyridoxal-phosphate-dependent aminotransferase family. PhnW subfamily. Homodimer. It depends on pyridoxal 5'-phosphate as a cofactor.

It catalyses the reaction (2-aminoethyl)phosphonate + pyruvate = phosphonoacetaldehyde + L-alanine. In terms of biological role, involved in phosphonate degradation. This is 2-aminoethylphosphonate--pyruvate transaminase from Salmonella schwarzengrund (strain CVM19633).